We begin with the raw amino-acid sequence, 398 residues long: MRKRTEPVTLEHERCAASGSSSSGSAAAALDADCSLKQNLRLAGKGTAEPHSASDAGMKRALGRRKSLWFRLRKILLCVLGFYIAIPFLVKLCPGIQAKLIFLNFVRVPYFIDLKKPQDQGLNHTCNYYLQPEDDVTIGVWHTIPSVWWKNAQGKDQMWYEDALASNHPIILYLHGNAGTRGGDHRVELYKVLSSLGYHVVTFDYRGWGDSVGTPSERGMTYDALHVFDWIKARSGDNPVYIWGHSLGTGVATNLVRRLCERETPPDALILESPFTNIREEAKSHPFSVIYRYFPGFDWFFLDPITSSGIKFANDENMKHISCPLLILHAEDDPVVPFHLGRKLYNIAAPSRSFRDFKVQFIPFHSDLGYRHKYIYKSPELPRILREFLGKSEPERQH.

Over residues 1-15 the composition is skewed to basic and acidic residues; the sequence is MRKRTEPVTLEHERC. The interval 1-24 is disordered; that stretch reads MRKRTEPVTLEHERCAASGSSSSG. At 1-74 the chain is on the cytoplasmic side; that stretch reads MRKRTEPVTL…RKSLWFRLRK (74 aa). Residues 75–95 form a helical membrane-spanning segment; sequence ILLCVLGFYIAIPFLVKLCPG. The Extracellular segment spans residues 96–398; it reads IQAKLIFLNF…LGKSEPERQH (303 aa). N123 carries an N-linked (GlcNAc...) asparagine glycan. The Nucleophile role is filled by S246. Active-site charge relay system residues include D333 and H372.

This sequence belongs to the serine esterase family.

The protein resides in the endoplasmic reticulum membrane. It carries out the reaction 1-(9Z-octadecenoyl)-sn-glycero-3-phospho-L-serine + H2O = sn-glycero-3-phospho-L-serine + (9Z)-octadecenoate + H(+). The enzyme catalyses 1-(9Z-octadecenoyl)-sn-glycero-3-phospho-(1'-sn-glycerol) + H2O = sn-glycero-3-phospho-(1'-sn-glycerol) + (9Z)-octadecenoate + H(+). The catalysed reaction is 1-(9Z-octadecenoyl)-sn-glycero-3-phospho-(1D-myo-inositol) + H2O = sn-glycero-3-phospho-1D-myo-inositol + (9Z)-octadecenoate + H(+). It catalyses the reaction 1-(9Z-octadecenoyl)-sn-glycero-3-phosphoethanolamine + H2O = sn-glycero-3-phosphoethanolamine + (9Z)-octadecenoate + H(+). It carries out the reaction 1-(9Z-octadecenoyl)-sn-glycero-3-phosphocholine + H2O = 1-(9Z-octadecenoyl)-sn-glycerol + phosphocholine + H(+). The enzyme catalyses 2-(9Z-octadecenoyl)-glycerol + H2O = glycerol + (9Z)-octadecenoate + H(+). The catalysed reaction is 1-hexadecanoyl-sn-glycero-3-phospho-L-serine + H2O = sn-glycero-3-phospho-L-serine + hexadecanoate + H(+). It catalyses the reaction 2-(5Z,8Z,11Z,14Z-eicosatetraenoyl)-glycerol + H2O = glycerol + (5Z,8Z,11Z,14Z)-eicosatetraenoate + H(+). It carries out the reaction Hydrolyzes glycerol monoesters of long-chain fatty acids.. The enzyme catalyses 1-decanoylglycerol + H2O = decanoate + glycerol + H(+). The catalysed reaction is 1-dodecanoylglycerol + H2O = dodecanoate + glycerol + H(+). It catalyses the reaction 1-tetradecanoylglycerol + H2O = tetradecanoate + glycerol + H(+). It carries out the reaction 2-hexadecanoylglycerol + H2O = glycerol + hexadecanoate + H(+). The enzyme catalyses 1-(9Z-octadecenoyl)-glycerol + H2O = glycerol + (9Z)-octadecenoate + H(+). The catalysed reaction is 2-(9Z,12Z-octadecadienoyl)-glycerol + H2O = (9Z,12Z)-octadecadienoate + glycerol + H(+). It catalyses the reaction 1-(5Z,8Z,11Z,14Z-eicosatetraenoyl)-glycerol + H2O = glycerol + (5Z,8Z,11Z,14Z)-eicosatetraenoate + H(+). It carries out the reaction 1-(9Z,12Z-octadecadienoyl)-glycerol + H2O = (9Z,12Z)-octadecadienoate + glycerol + H(+). The enzyme catalyses 1-hexadecanoylglycerol + H2O = glycerol + hexadecanoate + H(+). The catalysed reaction is 1-octadecanoylglycerol + H2O = octadecanoate + glycerol + H(+). It catalyses the reaction 1-octadecanoyl-2-(9,10-epoxyoctadecanoyl)-sn-glycero-3-phospho-L-serine + H2O = 9,10-epoxyoctadecanoate + 1-octadecanoyl-sn-glycero-3-phosphoserine + H(+). It carries out the reaction 1-octadecanoyl-2-(10-hydroxyoctadecanoyl)-sn-glycero-3-phospho-L-serine + H2O = 1-octadecanoyl-sn-glycero-3-phosphoserine + 10-hydroxyoctadecanoate + H(+). The enzyme catalyses 1-hexadecanoyl-2-(10-hydroxyoctadecanoyl)-sn-glycero-3-phospho-L-serine + H2O = 10-hydroxyoctadecanoate + 1-hexadecanoyl-sn-glycero-3-phospho-L-serine + H(+). Its function is as follows. Lysophosphatidylserine (LPS) lipase that mediates the hydrolysis of lysophosphatidylserine, a class of signaling lipids that regulates immunological and neurological processes. Represents a major lysophosphatidylserine lipase in the brain, thereby playing a key role in the central nervous system. Also able to hydrolyze oxidized phosphatidylserine; oxidized phosphatidylserine is produced in response to severe inflammatory stress and constitutes a proapoptotic 'eat me' signal. Also has monoacylglycerol (MAG) lipase activity: hydrolyzes 2-arachidonoylglycerol (2-AG), thereby acting as a regulator of endocannabinoid signaling pathways. Has a strong preference for very-long-chain lipid substrates; substrate specificity is likely due to improved catalysis and not improved substrate binding. This Rattus norvegicus (Rat) protein is Lysophosphatidylserine lipase ABHD12.